We begin with the raw amino-acid sequence, 315 residues long: Three-prime repair exonuclease 1 (315 aa).

Residues aspartate 18 and glutamate 20 each contribute to the Mg(2+) site. 20 to 21 (EA) contacts substrate. At serine 78 the chain carries Phosphoserine. Position 129 (tyrosine 129) interacts with substrate. A Phosphoserine modification is found at serine 167. Histidine 195 functions as the Proton donor/acceptor in the catalytic mechanism. Mg(2+) is bound at residue aspartate 200. Aspartate 200 provides a ligand contact to substrate. A necessary for endoplasmic reticulum localization region spans residues 236–315 (TTSTGTNPRP…YGLSLAMPGQ (80 aa)). The interval 243–315 (PRPSAVTATV…YGLSLAMPGQ (73 aa)) is interaction with UBQLN1. Residues 256-282 (RASDTGPNLRGDRSPKPAPSPKMCPGA) form a disordered region. Positions 271 to 282 (KPAPSPKMCPGA) are enriched in pro residues. The tract at residues 282-315 (APPGEGLLAPLGLLAFLTLAVAMLYGLSLAMPGQ) is necessary for cytoplasmic retention.

This sequence belongs to the exonuclease superfamily. TREX family. In terms of assembly, homodimer. Interacts (via proline-rich region) with TCERG1/CA150 (via the second WW domain). Component of the SET complex, composed of at least ANP32A, APEX1, HMGB2, NME1, SET and TREX1. Within this complex, directly interacts with SET; this interaction does not result in TREX1 inhibition. Also interacts with NME1, but only following translocation to the nucleus. Directly interacts with UBQLN1 (via ubiquitin-like domain); the interaction may control TREX1 subcellular location. Requires Mg(2+) as cofactor. Post-translationally, ubiquitinated, but not targeted to proteasomal degradation. Ubiquitination may be important for interaction with UBQLN1.

It localises to the nucleus. It is found in the cytoplasm. The protein localises to the cytosol. Its subcellular location is the endoplasmic reticulum membrane. It catalyses the reaction Exonucleolytic cleavage in the 3'- to 5'-direction to yield nucleoside 5'-phosphates.. Its function is as follows. Major cellular 3'-to-5' DNA exonuclease which digests single-stranded DNA (ssDNA) and double-stranded DNA (dsDNA) with mismatched 3' termini. Prevents cell-intrinsic initiation of autoimmunity. Acts by metabolizing DNA fragments from endogenous retroelements, including L1, LTR and SINE elements. Plays a key role in degradation of DNA fragments at cytosolic micronuclei arising from genome instability: its association with the endoplasmic reticulum membrane directs TREX1 to ruptured micronuclei, leading to micronuclear DNA degradation. Micronuclear DNA degradation is required to limit CGAS activation and subsequent inflammation. Unless degraded, these DNA fragments accumulate in the cytosol and activate the cGAS-STING innate immune signaling, leading to the production of type I interferon. Prevents chronic ATM-dependent checkpoint activation, by processing ssDNA polynucleotide species arising from the processing of aberrant DNA replication intermediates. Inefficiently degrades oxidized DNA, such as that generated upon antimicrobial reactive oxygen production or upon absorption of UV light. During GZMA-mediated cell death, contributes to DNA damage in concert with NME1. NME1 nicks one strand of DNA and TREX1 removes bases from the free 3' end to enhance DNA damage and prevent DNA end reannealing and rapid repair. The polypeptide is Three-prime repair exonuclease 1 (Bos taurus (Bovine)).